A 145-amino-acid polypeptide reads, in one-letter code: Putative antiporter subunit mnhG2 (145 aa).

The next 3 membrane-spanning stretches (helical) occupy residues 11–31 (IAAV…IGIV), 51–71 (VLLT…FFSV), and 72–92 (RLLL…HLVA).

The protein belongs to the CPA3 antiporters (TC 2.A.63) subunit G family. As to quaternary structure, may form a heterooligomeric complex that consists of seven subunits: mnhA2, mnhB2, mnhC2, mnhD2, mnhE2, mnhF2 and mnhG2.

The protein localises to the cell membrane. The chain is Putative antiporter subunit mnhG2 (mnhG2) from Staphylococcus aureus (strain MRSA252).